Reading from the N-terminus, the 86-residue chain is Sodium channel neurotoxin MeuNaTxalpha-5 (86 aa).

A signal peptide spans 1–19 (MNYLILISFALLVITGVES). Residues 21–85 (RDAYIAKPHN…VPIRIPGKCH (65 aa)) form the LCN-type CS-alpha/beta domain. 4 disulfide bridges follow: Cys31-Cys84, Cys35-Cys57, Cys43-Cys67, and Cys47-Cys69. Residue Arg86 is a propeptide, removed by a carboxypeptidase.

This sequence belongs to the long (4 C-C) scorpion toxin superfamily. Sodium channel inhibitor family. Alpha subfamily. In terms of tissue distribution, expressed by the venom gland.

It localises to the secreted. In terms of biological role, alpha toxins bind voltage-independently at site-3 of sodium channels (Nav) and inhibit the inactivation of the activated channels, thereby blocking neuronal transmission. This toxin inhibits inactivation of Nav1.6/SCN8A (EC(50)=790 nM) and drosophila DmNav1 (EC(50)=280 nM). The toxin (1 uM) does not significantly shift the midpoint of activation at the two channels, but induces a significant depolarizing shift in the V(1/2) of inactivation of the channels. Has antimicrobial activity. The sequence is that of Sodium channel neurotoxin MeuNaTxalpha-5 from Mesobuthus eupeus (Lesser Asian scorpion).